The following is a 203-amino-acid chain: Small ribosomal subunit protein uS4 (203 aa).

Residues 93-173 (RRFDNVVFRS…IPSWIQVDKA (81 aa)) enclose the S4 RNA-binding domain.

Belongs to the universal ribosomal protein uS4 family. Part of the 30S ribosomal subunit. Contacts protein S5. The interaction surface between S4 and S5 is involved in control of translational fidelity.

One of the primary rRNA binding proteins, it binds directly to 16S rRNA where it nucleates assembly of the body of the 30S subunit. Its function is as follows. With S5 and S12 plays an important role in translational accuracy. In Chlorobium phaeobacteroides (strain DSM 266 / SMG 266 / 2430), this protein is Small ribosomal subunit protein uS4.